Reading from the N-terminus, the 323-residue chain is rRNA 2'-O-methyltransferase fibrillarin (323 aa).

A disordered region spans residues 1–80 (MSFRPGSRGG…GARGGAKGGA (80 aa)). A compositionally biased stretch (gly residues) spans 7–78 (SRGGARGGRG…RGGARGGAKG (72 aa)). Arg-8, Arg-12, Arg-15, Arg-19, Arg-25, Arg-29, Arg-35, Arg-39, Arg-43, Arg-49, Arg-53, Arg-57, Arg-61, Arg-65, Arg-69, and Arg-73 each carry asymmetric dimethylarginine. Residues 175–176 (TS), 194–195 (EF), 219–220 (DA), and 239–242 (DVAQ) contribute to the S-adenosyl-L-methionine site.

Belongs to the methyltransferase superfamily. Fibrillarin family. As to quaternary structure, component of box C/D small nucleolar ribonucleoprotein (snoRNP) particles that contain SNU13, NOP1, SIK1/NOP56 and NOP58, plus a guide RNA. In terms of processing, by homology to other fibrillarins, some or all of the N-terminal domain arginines are modified to asymmetric dimethylarginine (DMA).

Its subcellular location is the nucleus. It localises to the nucleolus. It carries out the reaction L-glutaminyl-[histone H2A] + S-adenosyl-L-methionine = N(5)-methyl-L-glutaminyl-[histone H2A] + S-adenosyl-L-homocysteine + H(+). Functionally, S-adenosyl-L-methionine-dependent methyltransferase that has the ability to methylate both RNAs and proteins. Involved in pre-rRNA processing. Utilizes the methyl donor S-adenosyl-L-methionine to catalyze the site-specific 2'-hydroxyl methylation of ribose moieties in pre-ribosomal RNA. Site specificity is provided by a guide RNA that base pairs with the substrate. Methylation occurs at a characteristic distance from the sequence involved in base pairing with the guide RNA. Also acts as a protein methyltransferase by mediating methylation of 'Gln-105' of histone H2A (H2AQ105me), a modification that impairs binding of the FACT complex and is specifically present at 35S ribosomal DNA locus. In Candida glabrata (strain ATCC 2001 / BCRC 20586 / JCM 3761 / NBRC 0622 / NRRL Y-65 / CBS 138) (Yeast), this protein is rRNA 2'-O-methyltransferase fibrillarin (NOP1).